Reading from the N-terminus, the 1548-residue chain is Zinc finger MYM-type protein 4 (1548 aa).

The residue at position 2 (alanine 2) is an N-acetylalanine. Threonine 107 is subject to Phosphothreonine. Phosphoserine occurs at positions 110 and 122. Residues lysine 140 and lysine 149 each participate in a glycyl lysine isopeptide (Lys-Gly) (interchain with G-Cter in SUMO2) cross-link. Residue serine 162 is modified to Phosphoserine. The disordered stretch occupies residues 162–189; it reads SKETFSGKEKNRDLTYEREKRLDKPHKD. A Glycyl lysine isopeptide (Lys-Gly) (interchain with G-Cter in SUMO2) cross-link involves residue lysine 195. Serine 197 carries the post-translational modification Phosphoserine. Residues lysine 201 and lysine 232 each participate in a glycyl lysine isopeptide (Lys-Gly) (interchain with G-Cter in SUMO2) cross-link. Position 242 is a phosphoserine (serine 242). A Glycyl lysine isopeptide (Lys-Gly) (interchain with G-Cter in SUMO1); alternate cross-link involves residue lysine 250. A Glycyl lysine isopeptide (Lys-Gly) (interchain with G-Cter in SUMO2); alternate cross-link involves residue lysine 250. Residues lysine 260, lysine 271, lysine 273, lysine 289, lysine 327, lysine 400, lysine 428, and lysine 430 each participate in a glycyl lysine isopeptide (Lys-Gly) (interchain with G-Cter in SUMO2) cross-link. MYM-type zinc fingers lie at residues 362–402, 414–457, 464–499, 510–544, 554–592, 600–631, 708–742, 749–788, and 795–829; these read QLFC…PKDV, KDFC…RHEV, HKLCSDACFSKFRSANNLTMNCCENCGGYCYSGSGQ, KKFCSSSCITAYKQKSAKITPCALCKSLRSSAEMI, ELFCSVNCLSAYRVKMVTSAGVQVQCNSCKTSAIPQYHL, RNFCSYSCVVAFQNLFNKPTGMNSSVVPLSQG, FQFCGKNCSDEYKKINNVMAMCEYCKIEKIVKETV, KSFCSEGCKLLYKHDLAKRWGNHCKMCSYCLQTSPKLVQN, and EEFCCEECMSKYTVLFYQMAKCDACKRQGKLSESL. Position 1030 is a phosphoserine (serine 1030). Residues lysine 1035 and lysine 1061 each participate in a glycyl lysine isopeptide (Lys-Gly) (interchain with G-Cter in SUMO2) cross-link. Serine 1064 and serine 1071 each carry phosphoserine. Glycyl lysine isopeptide (Lys-Gly) (interchain with G-Cter in SUMO2) cross-links involve residues lysine 1080 and lysine 1127. The span at 1124 to 1134 shows a compositional bias: basic and acidic residues; sequence SELKQFSKGET. Disordered regions lie at residues 1124 to 1183 and 1231 to 1260; these read SELK…KSIV and KCGGVEQASSSPRSDPLGSTQDHALSQESS. Positions 1160–1181 are enriched in basic residues; the sequence is SRTRRRHRDGFPQPRRRGRKKS. Serine 1181 and serine 1256 each carry phosphoserine. The span at 1237 to 1260 shows a compositional bias: polar residues; sequence QASSSPRSDPLGSTQDHALSQESS. A Glycyl lysine isopeptide (Lys-Gly) (interchain with G-Cter in SUMO2) cross-link involves residue lysine 1431. A phosphoserine mark is found at serine 1539, serine 1542, and serine 1547.

Expressed at higher level in heart, skeletal muscle, kidney and liver.

Its function is as follows. Plays a role in the regulation of cell morphology and cytoskeletal organization. The chain is Zinc finger MYM-type protein 4 (ZMYM4) from Homo sapiens (Human).